Consider the following 305-residue polypeptide: Ornithine carbamoyltransferase, catabolic (305 aa).

Residues 50 to 53 (STRT), Q77, R101, and 128 to 131 (HPLQ) contribute to the carbamoyl phosphate site. L-ornithine is bound by residues N159, D223, and 227–228 (SM). Residues 263–264 (CL) and R291 each bind carbamoyl phosphate.

Belongs to the aspartate/ornithine carbamoyltransferase superfamily. OTCase family.

Its subcellular location is the cytoplasm. It catalyses the reaction carbamoyl phosphate + L-ornithine = L-citrulline + phosphate + H(+). Its pathway is amino-acid degradation; L-arginine degradation via ADI pathway; carbamoyl phosphate from L-arginine: step 2/2. Its function is as follows. Reversibly catalyzes the transfer of the carbamoyl group from carbamoyl phosphate (CP) to the N(epsilon) atom of ornithine (ORN) to produce L-citrulline. The protein is Ornithine carbamoyltransferase, catabolic of Thermoplasma acidophilum (strain ATCC 25905 / DSM 1728 / JCM 9062 / NBRC 15155 / AMRC-C165).